The sequence spans 696 residues: MPDLLLELRSEEIPARMQRRAAEDLKKLVTDALVERGFLYEGAKAFATPRRLALHVAGLPARGEAVREERRGPRVGAPEAAVQGFLKSAGLASLDQATTVTDPKKGEFYLAVIERPGRETLDVLAEILPGIIKSFPWPKSMRWGAASAQPGSLRWVRPLQSIVATFGPETETPEVVPFSVDGITAGMVTSGHRFLAPEPFEVRRFDDYVQALERADVILDADRRKDIILHDAKDLAFARGLDLVEDEGLLEEVAGLVERPVVLMGSFEERFLEIPAEAIRATIRANQKCFVLRKSGSDELAPAFVLVSNLIASDGGAAITAGNERVVRARLSDARFFWETDKATKLEDRLPKLDSIVFHEKLGTQGERVARIAALAAEIAPLVAADPALAERAARLAKADLVTEMVGEFPELQGLMGRKYAALQGEHDSVAAAIEEHYKPVGPSDRVPTDPVSIAVALADKLDTLVGFWAIDEKPTGSKDPYALRRAALGVIRAVIERSLRLSLASLLKGRFVSGSDERTADLLAFFADRLKVYLRDQGARHDLIDAVFALPGQDDLLMVVRRVEALGAFLATDDGKNLLAGYKRAANILRIEEKKDGRAYDEAPDAALAASGQPEERALAEALAAARQEASAAVAAEDFAGAMRALSRLRAPVDAFFEKVTVNADDPALRKNRLLLLNALRAATREVADFSRIEG.

This sequence belongs to the class-II aminoacyl-tRNA synthetase family. As to quaternary structure, tetramer of two alpha and two beta subunits.

Its subcellular location is the cytoplasm. The enzyme catalyses tRNA(Gly) + glycine + ATP = glycyl-tRNA(Gly) + AMP + diphosphate. This chain is Glycine--tRNA ligase beta subunit, found in Methylorubrum extorquens (strain CM4 / NCIMB 13688) (Methylobacterium extorquens).